Reading from the N-terminus, the 307-residue chain is Cytochrome f (307 aa).

A signal peptide spans 1–24; the sequence is MKKNLFLVSVFASLFVGTANNALA. Positions 25, 45, 48, and 49 each coordinate heme. A helical transmembrane segment spans residues 273-293; it reads LQGLVIFLGFVLIAQVFLVLK.

The protein belongs to the cytochrome f family. In terms of assembly, the 4 large subunits of the cytochrome b6-f complex are cytochrome b6, subunit IV (17 kDa polypeptide, petD), cytochrome f and the Rieske protein, while the 4 small subunits are PetG, PetL, PetM and PetN. The complex functions as a dimer. Heme is required as a cofactor.

It is found in the plastid. The protein localises to the chloroplast thylakoid membrane. In terms of biological role, component of the cytochrome b6-f complex, which mediates electron transfer between photosystem II (PSII) and photosystem I (PSI), cyclic electron flow around PSI, and state transitions. This Ostreococcus tauri protein is Cytochrome f.